The chain runs to 337 residues: 2-oxoglutarate receptor 1 (337 aa).

Over 1-38 (MIEPLDSPASDSDFLDYPSALGNCTDEQISFKMQYLPV) the chain is Extracellular. N-linked (GlcNAc...) asparagine glycosylation occurs at Asn-23. Residues 39-59 (IYSIIFLVGFPGNTVAISIYI) traverse the membrane as a helical segment. Residues 60 to 69 (FKMRPWRGST) lie on the Cytoplasmic side of the membrane. Residues 70–90 (VIMLNLALTDLLYLTSLPFLI) traverse the membrane as a helical segment. Residues 91-116 (HYYASGENWIFGDFMCKFIRFGFHFN) are Extracellular-facing. Residues Cys-106 and Cys-183 are joined by a disulfide bond. A helical membrane pass occupies residues 117 to 137 (LYSSILFLTCFSLFRYVVIIH). Over 138–151 (PMSCFSIQKTRWAV) the chain is Cytoplasmic. The helical transmembrane segment at 152-172 (VACAGVWVISLVAVMPMTFLI) threads the bilayer. Over 173 to 200 (TSTTRTNRSACLDLTSSDDLTTIKWYNL) the chain is Extracellular. A helical transmembrane segment spans residues 201–221 (ILTATTFCLPLVIVTLCYTTI). Residues 222–242 (ISTLTHGPRTHSCFKQKARRL) are Cytoplasmic-facing. Residues 243-263 (TILLLLVFYICFLPFHILRVI) traverse the membrane as a helical segment. Residues 264-284 (RIESRLLSISCSIESHIHEAY) lie on the Extracellular side of the membrane. The helical transmembrane segment at 285–305 (IVSRPLAALNTFGNLLLYVVV) threads the bilayer. Residues 306–337 (SNNFQQAFCSIVRCKASGDLEQGKKDSCSNNP) lie on the Cytoplasmic side of the membrane.

It belongs to the G-protein coupled receptor 1 family. As to expression, predominantly expressed in the kidney with limited expression in the testis and the smooth muscle. Expressed in SLC26A4/pendrin-positive type B and non-A non-B intercalated cells (at protein level).

It is found in the cell membrane. In terms of biological role, g protein-coupled receptor for dicarboxylates and amino dicarboxylates. Receptor for itaconate produced by activated macrophages upon bacterial infection. In the respiratory epithelium, couples the binding of itaconate to the activation of GNA11 and downstream intracellular Ca(2+) release, leading to mucocilliary clearance of airborne pathogens. Receptor for leukotriene E4 (LTE4) produced by mast cells upon allergic inflammation. Binds with high affinity to LTE4 and elicits mucin release from pulmonary epithelium in response to airborne fungi allergens. Regulates mucin-producing goblet cell homeostasis. Receptor for alpha-ketoglutarate produced by proximal tubule renal cells upon metabolic alkalosis. In an intrarenal paracrine signaling pathway, binds alpha-ketoglutarate and drives transepithelial salt reabsorption and bicarbonate secretion by SLC26A4/pendrin-positive intercalated cells. The polypeptide is 2-oxoglutarate receptor 1 (Oxgr1) (Mus musculus (Mouse)).